A 510-amino-acid polypeptide reads, in one-letter code: NEDD8-activating enzyme E1 regulatory subunit (510 aa).

A2 is subject to N-acetylalanine. 2 positions are modified to N6-acetyllysine: K6 and K317. The tract at residues 307–320 is interaction with UBA3; it reads DMIADSGKYIKLQN.

It belongs to the ubiquitin-activating E1 family. ULA1 subfamily. As to quaternary structure, heterodimer of UBA3 and NAE1. The complex binds NEDD8 and UBE2M. Binds APP and TP53BP2. In terms of processing, ubiquitinated by TRIP12, leading to its degradation by the proteasome.

It is found in the cell membrane. The protein operates within protein modification; protein neddylation. With respect to regulation, binding of TP53BP2 to the regulatory subunit NAE1 decreases neddylation activity. Regulatory subunit of the dimeric UBA3-NAE1 E1 enzyme. E1 activates NEDD8 by first adenylating its C-terminal glycine residue with ATP, thereafter linking this residue to the side chain of the catalytic cysteine, yielding a NEDD8-UBA3 thioester and free AMP. E1 finally transfers NEDD8 to the catalytic cysteine of UBE2M. Necessary for cell cycle progression through the S-M checkpoint. Overexpression of NAE1 causes apoptosis through deregulation of NEDD8 conjugation. The covalent attachment of NEDD8 to target proteins is known as 'neddylation' and the process is involved in the regulation of cell growth, viability and development. The sequence is that of NEDD8-activating enzyme E1 regulatory subunit (NAE1) from Macaca fascicularis (Crab-eating macaque).